The sequence spans 601 residues: NADPH--cytochrome P450 reductase (601 aa).

The region spanning 25–169 is the Flavodoxin-like domain; it reads IVVFYGSQTG…DFVTWREQFW (145 aa). FMN contacts are provided by residues 31–36, 83–86, 118–127, and Asp153; these read SQTGTG, ATYG, and LGDKTYEHYN. The 202-residue stretch at 224-425 folds into the FAD-binding FR-type domain; that stretch reads KNPFLAPVTV…ICAVLVEYXT (202 aa). FAD is bound by residues 399 to 402, 417 to 419, Tyr423, and 427 to 430; these read RYYS, CAV, and GVAT. NADP(+)-binding positions include Thr458, 519–520, 525–529, and Asp562; these read SR and KVYVQ. Trp600 provides a ligand contact to FAD.

It belongs to the NADPH--cytochrome P450 reductase family. This sequence in the N-terminal section; belongs to the flavodoxin family. In the C-terminal section; belongs to the flavoprotein pyridine nucleotide cytochrome reductase family. Requires FAD as cofactor. It depends on FMN as a cofactor.

The protein resides in the endoplasmic reticulum membrane. The catalysed reaction is 2 oxidized [cytochrome P450] + NADPH = 2 reduced [cytochrome P450] + NADP(+) + H(+). This enzyme is required for electron transfer from NADP to cytochrome P450 in microsomes. It can also provide electron transfer to heme oxygenase and cytochrome B5. This is NADPH--cytochrome P450 reductase from Salmo trutta (Brown trout).